Here is a 275-residue protein sequence, read N- to C-terminus: Lectin (275 aa).

A signal peptide spans 1 to 30 (MASLQTQMISFYAIFLSILLTTILFFKVNS). 2 residues coordinate Mn(2+): glutamate 149 and aspartate 151. Residues aspartate 151, phenylalanine 153, asparagine 155, and aspartate 159 each contribute to the Ca(2+) site. The Mn(2+) site is built by aspartate 159 and histidine 166. Asparagine 217 carries N-linked (GlcNAc...) asparagine glycosylation.

It belongs to the leguminous lectin family. Tetramer of two alpha and two beta chains.

D-mannose specific lectin. In Pisum sativum (Garden pea), this protein is Lectin (LECA).